The following is a 376-amino-acid chain: Protein insensitive (376 aa).

The stretch at 50 to 79 forms a coiled coil; sequence QVEVENRALRDKVRYLEAKLQQHKDLLSQI. Positions 258–356 constitute a BEN domain; sequence GPNNTCVPAS…TKCADENKMM (99 aa).

In terms of assembly, homodimer. Interacts (via BEN domain) with Su(H). Interacts with Cp190.

The protein localises to the nucleus. Functionally, can act as both a transcriptional repressor and corepressor. Represses the expression of genes involved in neural development and preferentially binds palindromic sequence 5'-CCAATTGG-3' to mediate transcriptional repression. Acts as a corepressor for suppressor of hairless (Su(H)) and inhibits Notch signaling during peripheral nervous system development. The chain is Protein insensitive (insv) from Drosophila melanogaster (Fruit fly).